The sequence spans 753 residues: LON peptidase N-terminal domain and RING finger protein 3 (753 aa).

The tract at residues 17-57 (GSNNLELAEPEEPGTSAAAGQSAAHPEEVTPEGSQALGAQE) is disordered. The stretch at 72-105 (CKVLLTQADALASEGHLREALEVYRQLSERQQLV) is one TPR 1 repeat. An RING-type 1 zinc finger spans residues 159-197 (CKKCHGFLSDPVSLWCGHTFCKLCLERGRAADRRCALCG). TPR repeat units follow at residues 244–277 (ASQLRHEGNRLFREHQVEAALLKYNEAVRLAPND), 279–311 (LLYSNRSQIYFTLESHEDALHDAEIACKLRPMG), and 313–345 (KAHFRKAQALATLGKVKEALKEFLYCVSLDGKN). The tract at residues 351–450 (EAQRENLELP…QGAKPDLSNP (100 aa)) is disordered. The segment covering 363–382 (SNQEGAAAAEESSSLANSAQ) has biased composition (low complexity). Positions 386–413 (SSKEDRKKDQEGEDRDAASVRTGKCQEK) are enriched in basic and acidic residues. The RING-type 2 zinc-finger motif lies at 461–499 (CSLCMRLFYEPVTTPCGHTFCLKCLERCLDHNAKCPLCK). Residues 540–749 (MEELSNLNKN…GIRRILAFIS (210 aa)) enclose the Lon N-terminal domain.

The sequence is that of LON peptidase N-terminal domain and RING finger protein 3 (Lonrf3) from Mus musculus (Mouse).